We begin with the raw amino-acid sequence, 194 residues long: Elongation factor P (194 aa).

Belongs to the elongation factor P family.

The protein resides in the cytoplasm. The protein operates within protein biosynthesis; polypeptide chain elongation. Functionally, involved in peptide bond synthesis. Stimulates efficient translation and peptide-bond synthesis on native or reconstituted 70S ribosomes in vitro. Probably functions indirectly by altering the affinity of the ribosome for aminoacyl-tRNA, thus increasing their reactivity as acceptors for peptidyl transferase. The chain is Elongation factor P from Hydrogenobaculum sp. (strain Y04AAS1).